A 330-amino-acid polypeptide reads, in one-letter code: DNA-directed RNA polymerase subunit alpha (330 aa).

Residues 1-232 form an alpha N-terminal domain (alpha-NTD) region; that stretch reads MAILAFQKPE…SHFSLFAENK (232 aa). Residues 248–330 form an alpha C-terminal domain (alpha-CTD) region; that stretch reads EDSLHMRQLL…DISKYKLDKD (83 aa).

The protein belongs to the RNA polymerase alpha chain family. Homodimer. The RNAP catalytic core consists of 2 alpha, 1 beta, 1 beta' and 1 omega subunit. When a sigma factor is associated with the core the holoenzyme is formed, which can initiate transcription.

It carries out the reaction RNA(n) + a ribonucleoside 5'-triphosphate = RNA(n+1) + diphosphate. In terms of biological role, DNA-dependent RNA polymerase catalyzes the transcription of DNA into RNA using the four ribonucleoside triphosphates as substrates. The polypeptide is DNA-directed RNA polymerase subunit alpha (Porphyromonas gingivalis (strain ATCC BAA-308 / W83)).